The primary structure comprises 525 residues: GMP synthase [glutamine-hydrolyzing] (525 aa).

Positions 8-206 (PLLILDFGSQ…VVDICKASTD (199 aa)) constitute a Glutamine amidotransferase type-1 domain. Catalysis depends on C85, which acts as the Nucleophile. Catalysis depends on residues H180 and E182. Residues 207 to 400 (WTPEHIIDEA…LGLPHDMVYR (194 aa)) enclose the GMPS ATP-PPase domain. ATP is bound at residue 234–240 (SGGVDSS).

Homodimer.

The catalysed reaction is XMP + L-glutamine + ATP + H2O = GMP + L-glutamate + AMP + diphosphate + 2 H(+). The protein operates within purine metabolism; GMP biosynthesis; GMP from XMP (L-Gln route): step 1/1. Its function is as follows. Catalyzes the synthesis of GMP from XMP. This is GMP synthase [glutamine-hydrolyzing] from Legionella pneumophila (strain Lens).